Consider the following 101-residue polypeptide: Floral defensin-like protein 2 (101 aa).

Residues 1–25 (MARSICFFAVAILALMLFAAYETEA) form the signal peptide. Cystine bridges form between Cys-28–Cys-74, Cys-32–Cys-48, Cys-39–Cys-61, Cys-45–Cys-68, and Cys-49–Cys-70. The propeptide at 75 to 101 (ATEEATATLANEVKTMAEALVEEDMME) is removed in mature form.

This sequence belongs to the DEFL family. When compared to other plant defensins, the petunia defensins have an additional fifth disulfide bond. As to expression, petals.

It localises to the secreted. The protein localises to the vacuole. Functionally, plant defense peptide with antifungal activity against F.oxysporum and B.cinerea. In Petunia hybrida (Petunia), this protein is Floral defensin-like protein 2 (D2).